A 154-amino-acid chain; its full sequence is Prefoldin subunit alpha (154 aa).

The segment covering 92–102 (DNAVESLSTKQ) has biased composition (polar residues). Residues 92–154 (DNAVESLSTK…MQDQQPEDNE (63 aa)) are disordered. Basic and acidic residues predominate over residues 103 to 114 (DALDNRIESLRD). The span at 128–148 (QQAQQMQQQMQQQQMQQMQDQ) shows a compositional bias: low complexity.

The protein belongs to the prefoldin subunit alpha family. Heterohexamer of two alpha and four beta subunits.

It localises to the cytoplasm. Molecular chaperone capable of stabilizing a range of proteins. Seems to fulfill an ATP-independent, HSP70-like function in archaeal de novo protein folding. This is Prefoldin subunit alpha from Haloquadratum walsbyi (strain DSM 16790 / HBSQ001).